We begin with the raw amino-acid sequence, 278 residues long: Large ribosomal subunit protein uL2 (278 aa).

Disordered stretches follow at residues Met-1 to Asp-20, Thr-25 to His-58, and Gly-223 to Arg-278. Over residues Leu-37–His-58 the composition is skewed to basic residues. The span at Pro-253 to Ile-268 shows a compositional bias: basic and acidic residues. A compositionally biased stretch (basic residues) spans Val-269 to Arg-278.

It belongs to the universal ribosomal protein uL2 family. Part of the 50S ribosomal subunit. Forms a bridge to the 30S subunit in the 70S ribosome.

Its function is as follows. One of the primary rRNA binding proteins. Required for association of the 30S and 50S subunits to form the 70S ribosome, for tRNA binding and peptide bond formation. It has been suggested to have peptidyltransferase activity; this is somewhat controversial. Makes several contacts with the 16S rRNA in the 70S ribosome. In Mycolicibacterium smegmatis (strain ATCC 700084 / mc(2)155) (Mycobacterium smegmatis), this protein is Large ribosomal subunit protein uL2.